The primary structure comprises 108 residues: UPF0060 membrane protein Msil_1658 (108 aa).

4 helical membrane-spanning segments follow: residues 5–25, 31–51, 62–82, and 88–108; these read LVYVAAALAEIAGCFSFWAWL, SLWLIPGTASLLLFAWLLTLI, AYGGVYVTVSLLWLWAMEGVW, and LGGATLCLIGAAIIILAPRPA.

Belongs to the UPF0060 family.

It is found in the cell inner membrane. This is UPF0060 membrane protein Msil_1658 from Methylocella silvestris (strain DSM 15510 / CIP 108128 / LMG 27833 / NCIMB 13906 / BL2).